We begin with the raw amino-acid sequence, 355 residues long: Methionine import ATP-binding protein MetN (355 aa).

The 243-residue stretch at 8–250 (LKNIDITFTQ…PQEDLTQEFI (243 aa)) folds into the ABC transporter domain. 42–49 (GYSGAGKS) contributes to the ATP binding site.

This sequence belongs to the ABC transporter superfamily. Methionine importer (TC 3.A.1.24) family. As to quaternary structure, the complex is composed of two ATP-binding proteins (MetN), two transmembrane proteins (MetI) and a solute-binding protein (MetQ).

It is found in the cell membrane. The enzyme catalyses L-methionine(out) + ATP + H2O = L-methionine(in) + ADP + phosphate + H(+). The catalysed reaction is D-methionine(out) + ATP + H2O = D-methionine(in) + ADP + phosphate + H(+). In terms of biological role, part of the ABC transporter complex MetNIQ involved in methionine import. Responsible for energy coupling to the transport system. The sequence is that of Methionine import ATP-binding protein MetN from Streptococcus thermophilus (strain ATCC BAA-250 / LMG 18311).